We begin with the raw amino-acid sequence, 849 residues long: Probable ATP-dependent RNA helicase ddx20 (849 aa).

The disordered stretch occupies residues 9 to 39 (FSNPMNSNSSNNIENNNNSNNNNNNFKNNFK). A Q motif motif is present at residues 55-83 (ITFSELLLQKEVLKGLEDGGYQRPSPIQL). ATP-binding positions include Arg-77, Gln-82, 99 to 106 (AKSGTGKT), and 102 to 107 (GTGKTI). The Helicase ATP-binding domain maps to 86–319 (IPLGISGVDL…KLYMNNENLV (234 aa)). The short motif at 255 to 258 (DEAD) is the DEAD box element. Residues 355-499 (KCKSLVLVLE…QIENENENEN (145 aa)) enclose the Helicase C-terminal domain. 4 disordered regions span residues 480–504 (QQQQQQQQQQQIENENENENNNNNE), 572–644 (INEN…ENDN), 667–737 (SNNN…YPHY), and 761–817 (NNYN…NNPY). Acidic residues-rich tracts occupy residues 583–595 (NEDEEEEQEEDDY), 604–615 (EDEEEEQEEDDY), and 624–644 (EEEEQEQQEEDDDNYNYENDN). Low complexity-rich tracts occupy residues 667-687 (SNNNNNNNKNKYGNTINNNHY) and 696-720 (KNSINNNKFKNKNINNNDQRNSQSN).

The protein belongs to the DEAD box helicase family. DDX20 subfamily. As to quaternary structure, part of the core SMN complex.

It localises to the cytoplasm. The protein resides in the nucleus. It carries out the reaction ATP + H2O = ADP + phosphate + H(+). Its function is as follows. The SMN complex catalyzes the assembly of small nuclear ribonucleoproteins (snRNPs), the building blocks of the spliceosome, and thereby plays an important role in the splicing of cellular pre-mRNAs. Most spliceosomal snRNPs contain a common set of Sm proteins SNRPB, SNRPD1, SNRPD2, SNRPD3, SNRPE, SNRPF and SNRPG that assemble in a heptameric protein ring on the Sm site of the small nuclear RNA to form the core snRNP (Sm core). In the cytosol, the Sm proteins SNRPD1, SNRPD2, SNRPE, SNRPF and SNRPG are trapped in an inactive 6S pICln-Sm complex by the chaperone CLNS1A that controls the assembly of the core snRNP. To assemble core snRNPs, the SMN complex accepts the trapped 5Sm proteins from CLNS1A forming an intermediate. Binding of snRNA inside 5Sm triggers eviction of the SMN complex, thereby allowing binding of SNRPD3 and SNRPB to complete assembly of the core snRNP. May also play a role in the metabolism of small nucleolar ribonucleoprotein (snoRNPs). This is Probable ATP-dependent RNA helicase ddx20 (ddx20) from Dictyostelium discoideum (Social amoeba).